We begin with the raw amino-acid sequence, 118 residues long: Large ribosomal subunit protein bL20 (118 aa).

This sequence belongs to the bacterial ribosomal protein bL20 family.

In terms of biological role, binds directly to 23S ribosomal RNA and is necessary for the in vitro assembly process of the 50S ribosomal subunit. It is not involved in the protein synthesizing functions of that subunit. The sequence is that of Large ribosomal subunit protein bL20 from Proteus mirabilis (strain HI4320).